The following is a 394-amino-acid chain: Probable peptidoglycan glycosyltransferase FtsW (394 aa).

The Cytoplasmic segment spans residues 1–27; the sequence is MSALRSVAGLLQRWLLPARPAGLYDRQ. The chain crosses the membrane as a helical span at residues 28–48; the sequence is LVVLALALMAVGLVIVASASI. Over 49 to 64 the chain is Periplasmic; that stretch reads PEGIAINNDPFMFVKR. The chain crosses the membrane as a helical span at residues 65–85; sequence HGLFLVMALGISWFVLQVPMA. The Cytoplasmic portion of the chain corresponds to 86 to 88; it reads RWQ. Residues 89 to 109 traverse the membrane as a helical segment; the sequence is HYNGPMLVLAILMLVLVLLVG. The Periplasmic portion of the chain corresponds to 110-123; the sequence is RSVNGSIRWLPLGP. Residues 124–144 form a helical membrane-spanning segment; it reads FNLQPAEFGKLALFVYLAGYL. Residues 145–154 are Cytoplasmic-facing; it reads VRRQSEVRER. A helical transmembrane segment spans residues 155–175; that stretch reads FIGFMKPMAVLFVVAILLLAQ. Residue Pro176 is a topological domain, periplasmic. Residues 177–197 traverse the membrane as a helical segment; sequence DLGSVVVMFVTSLGMLFLAGA. Arg198 is a topological domain (cytoplasmic). The chain crosses the membrane as a helical span at residues 199–219; that stretch reads LGQFIGLILVGVSAVVTLVIA. The Periplasmic segment spans residues 220–279; sequence EPYRMRRVTSFLDPWADPFGSGYQLTQSLMAFGRGSWFGEGLGNSIQKMEYLPEAHTDFV. A helical transmembrane segment spans residues 280–300; that stretch reads FAILGEELGYAGVLGALFLIF. Over 301-322 the chain is Cytoplasmic; sequence ALSFKALKLGHQALVAERLYEG. The chain crosses the membrane as a helical span at residues 323-343; the sequence is YLAIGIGIWFSFQTFVNVGAA. Over 344–354 the chain is Periplasmic; sequence SGMMPTKGLTL. The chain crosses the membrane as a helical span at residues 355 to 375; sequence PLVSYGGSSLIIMMVAVSMLV. Over 376 to 394 the chain is Cytoplasmic; that stretch reads RIDFELRQASAQARVREVS.

The protein belongs to the SEDS family. FtsW subfamily.

It localises to the cell inner membrane. The enzyme catalyses [GlcNAc-(1-&gt;4)-Mur2Ac(oyl-L-Ala-gamma-D-Glu-L-Lys-D-Ala-D-Ala)](n)-di-trans,octa-cis-undecaprenyl diphosphate + beta-D-GlcNAc-(1-&gt;4)-Mur2Ac(oyl-L-Ala-gamma-D-Glu-L-Lys-D-Ala-D-Ala)-di-trans,octa-cis-undecaprenyl diphosphate = [GlcNAc-(1-&gt;4)-Mur2Ac(oyl-L-Ala-gamma-D-Glu-L-Lys-D-Ala-D-Ala)](n+1)-di-trans,octa-cis-undecaprenyl diphosphate + di-trans,octa-cis-undecaprenyl diphosphate + H(+). The protein operates within cell wall biogenesis; peptidoglycan biosynthesis. In terms of biological role, peptidoglycan polymerase that is essential for cell division. The polypeptide is Probable peptidoglycan glycosyltransferase FtsW (Aeromonas salmonicida (strain A449)).